The chain runs to 231 residues: Phosphoribosylformylglycinamidine synthase subunit PurQ (231 aa).

Residues 7-231 (GVVVFPGSNC…RLFASLFRQL (225 aa)) form the Glutamine amidotransferase type-1 domain. The active-site Nucleophile is the cysteine 89. Residues histidine 206 and glutamate 208 contribute to the active site.

Part of the FGAM synthase complex composed of 1 PurL, 1 PurQ and 2 PurS subunits.

It is found in the cytoplasm. The enzyme catalyses N(2)-formyl-N(1)-(5-phospho-beta-D-ribosyl)glycinamide + L-glutamine + ATP + H2O = 2-formamido-N(1)-(5-O-phospho-beta-D-ribosyl)acetamidine + L-glutamate + ADP + phosphate + H(+). The catalysed reaction is L-glutamine + H2O = L-glutamate + NH4(+). The protein operates within purine metabolism; IMP biosynthesis via de novo pathway; 5-amino-1-(5-phospho-D-ribosyl)imidazole from N(2)-formyl-N(1)-(5-phospho-D-ribosyl)glycinamide: step 1/2. Functionally, part of the phosphoribosylformylglycinamidine synthase complex involved in the purines biosynthetic pathway. Catalyzes the ATP-dependent conversion of formylglycinamide ribonucleotide (FGAR) and glutamine to yield formylglycinamidine ribonucleotide (FGAM) and glutamate. The FGAM synthase complex is composed of three subunits. PurQ produces an ammonia molecule by converting glutamine to glutamate. PurL transfers the ammonia molecule to FGAR to form FGAM in an ATP-dependent manner. PurS interacts with PurQ and PurL and is thought to assist in the transfer of the ammonia molecule from PurQ to PurL. The chain is Phosphoribosylformylglycinamidine synthase subunit PurQ from Chlorobium luteolum (strain DSM 273 / BCRC 81028 / 2530) (Pelodictyon luteolum).